The chain runs to 413 residues: 3-isopropylmalate dehydratase large subunit (413 aa).

Cysteine 293, cysteine 353, and cysteine 356 together coordinate [4Fe-4S] cluster.

It belongs to the aconitase/IPM isomerase family. LeuC type 2 subfamily. Heterodimer of LeuC and LeuD. [4Fe-4S] cluster serves as cofactor.

The catalysed reaction is (2R,3S)-3-isopropylmalate = (2S)-2-isopropylmalate. It functions in the pathway amino-acid biosynthesis; L-leucine biosynthesis; L-leucine from 3-methyl-2-oxobutanoate: step 2/4. In terms of biological role, catalyzes the isomerization between 2-isopropylmalate and 3-isopropylmalate, via the formation of 2-isopropylmaleate. The protein is 3-isopropylmalate dehydratase large subunit of Picrophilus torridus (strain ATCC 700027 / DSM 9790 / JCM 10055 / NBRC 100828 / KAW 2/3).